A 259-amino-acid chain; its full sequence is Protein N-terminal and lysine N-methyltransferase efm7 (259 aa).

Residues tryptophan 53, glycine 80–alanine 82, aspartate 102, tryptophan 138, and alanine 164 contribute to the S-adenosyl-L-methionine site.

Belongs to the class I-like SAM-binding methyltransferase superfamily. EFM7 family.

The protein resides in the cytoplasm. Functionally, S-adenosyl-L-methionine-dependent protein methyltransferase that trimethylates the N-terminal glycine 'Gly-2' of elongation factor 1-alpha, before also catalyzing the mono- and dimethylation of 'Lys-3'. This chain is Protein N-terminal and lysine N-methyltransferase efm7, found in Emericella nidulans (strain FGSC A4 / ATCC 38163 / CBS 112.46 / NRRL 194 / M139) (Aspergillus nidulans).